The chain runs to 179 residues: Protein HEADING DATE 3A (179 aa).

The protein belongs to the phosphatidylethanolamine-binding protein family. In terms of tissue distribution, expressed in the inner region of the SAM, stem and leaf blade vascular tissues (at protein level).

The protein resides in the cytoplasm. Its subcellular location is the nucleus. Its function is as follows. Probable mobile flower-promoting signal (florigen) that moves from the leaf to the shoot apical meristem (SAM) and induces flowering. Promotes the transition from vegetative growth to flowering downstream of HD1 and EHD1 under short day (SD) conditions. Acts upstream of MADS14 and MADS15. The chain is Protein HEADING DATE 3A (HD3A) from Oryza sativa subsp. japonica (Rice).